The primary structure comprises 197 residues: Putative peptidyl-prolyl cis-trans isomerase (197 aa).

Positions 14 to 195 (NEIKLIMHTN…HDITIDSIEI (182 aa)) constitute a PPIase cyclophilin-type domain.

This sequence belongs to the cyclophilin-type PPIase family.

It carries out the reaction [protein]-peptidylproline (omega=180) = [protein]-peptidylproline (omega=0). PPIases accelerate the folding of proteins. It catalyzes the cis-trans isomerization of proline imidic peptide bonds in oligopeptides. The protein is Putative peptidyl-prolyl cis-trans isomerase of Staphylococcus saprophyticus subsp. saprophyticus (strain ATCC 15305 / DSM 20229 / NCIMB 8711 / NCTC 7292 / S-41).